The sequence spans 194 residues: Flagellar transcriptional regulator FlhC (194 aa).

4 residues coordinate Zn(2+): cysteine 139, cysteine 142, cysteine 159, and cysteine 162.

This sequence belongs to the FlhC family. In terms of assembly, heterohexamer composed of two FlhC and four FlhD subunits. Each FlhC binds a FlhD dimer, forming a heterotrimer, and a hexamer assembles by dimerization of two heterotrimers. The cofactor is Zn(2+).

It localises to the cytoplasm. Its function is as follows. Functions in complex with FlhD as a master transcriptional regulator that regulates transcription of several flagellar and non-flagellar operons by binding to their promoter region. Activates expression of class 2 flagellar genes, including fliA, which is a flagellum-specific sigma factor that turns on the class 3 genes. Also regulates genes whose products function in a variety of physiological pathways. The chain is Flagellar transcriptional regulator FlhC from Xenorhabdus nematophila (Achromobacter nematophilus).